The primary structure comprises 180 residues: Large ribosomal subunit protein uL5 (180 aa).

The protein belongs to the universal ribosomal protein uL5 family. As to quaternary structure, part of the 50S ribosomal subunit; part of the 5S rRNA/L5/L18/L25 subcomplex. Contacts the 5S rRNA and the P site tRNA. Forms a bridge to the 30S subunit in the 70S ribosome.

Its function is as follows. This is one of the proteins that bind and probably mediate the attachment of the 5S RNA into the large ribosomal subunit, where it forms part of the central protuberance. In the 70S ribosome it contacts protein S13 of the 30S subunit (bridge B1b), connecting the 2 subunits; this bridge is implicated in subunit movement. Contacts the P site tRNA; the 5S rRNA and some of its associated proteins might help stabilize positioning of ribosome-bound tRNAs. This is Large ribosomal subunit protein uL5 from Brevibacillus brevis (strain 47 / JCM 6285 / NBRC 100599).